Here is a 433-residue protein sequence, read N- to C-terminus: 23S rRNA (uracil(1939)-C(5))-methyltransferase RlmD (433 aa).

The 59-residue stretch at 10–68 (RTTTRQIITVSVNDLDSFGQGVARHNGKTLFIPGLLPQENAEVTVTEDKKQYARAKVVR) folds into the TRAM domain. Positions 81, 87, 90, and 162 each coordinate [4Fe-4S] cluster. Residues Q265, F294, N299, E315, N342, and D363 each coordinate S-adenosyl-L-methionine. C389 acts as the Nucleophile in catalysis.

The protein belongs to the class I-like SAM-binding methyltransferase superfamily. RNA M5U methyltransferase family. RlmD subfamily.

The enzyme catalyses uridine(1939) in 23S rRNA + S-adenosyl-L-methionine = 5-methyluridine(1939) in 23S rRNA + S-adenosyl-L-homocysteine + H(+). In terms of biological role, catalyzes the formation of 5-methyl-uridine at position 1939 (m5U1939) in 23S rRNA. In Escherichia coli O157:H7, this protein is 23S rRNA (uracil(1939)-C(5))-methyltransferase RlmD.